Consider the following 357-residue polypeptide: MSVAQPRLLFAASGTGGHVFPALAVAEALPEAKIDWLGVPDRLETQLVGDRYPLHTIRVGGFQGSWLLRPLTALRLIGAIFKVRRLLKRQQIEAVFTTGGYIAGPAIAAAWSLGIPVVLHESNALPGKTTRLLSRFCRRVALGFAEAGEYLPGRPLQVVGTPLRSQFYQPSQHGLPIPENVPVLLVMGGSQGAVAINRLVRAAAPAWLAAGLWIVHLTGQQDPDRGQLQHPQYIELSFVDNVAPLLNRADFSISRAGAGSLAELAAAGLPSLLIPYPFAAEDHQTFNARIFAKAGAAILAPQSELTVEQLQQQILDLLRARLGAAIANPLPKMAAAAGKLHVADSAEQVANLLRSLL.

Residues 15–17 (TGG), asparagine 123, arginine 164, serine 190, and glutamine 284 each bind UDP-N-acetyl-alpha-D-glucosamine.

The protein belongs to the glycosyltransferase 28 family. MurG subfamily.

It localises to the cell inner membrane. It catalyses the reaction di-trans,octa-cis-undecaprenyl diphospho-N-acetyl-alpha-D-muramoyl-L-alanyl-D-glutamyl-meso-2,6-diaminopimeloyl-D-alanyl-D-alanine + UDP-N-acetyl-alpha-D-glucosamine = di-trans,octa-cis-undecaprenyl diphospho-[N-acetyl-alpha-D-glucosaminyl-(1-&gt;4)]-N-acetyl-alpha-D-muramoyl-L-alanyl-D-glutamyl-meso-2,6-diaminopimeloyl-D-alanyl-D-alanine + UDP + H(+). It participates in cell wall biogenesis; peptidoglycan biosynthesis. Its function is as follows. Cell wall formation. Catalyzes the transfer of a GlcNAc subunit on undecaprenyl-pyrophosphoryl-MurNAc-pentapeptide (lipid intermediate I) to form undecaprenyl-pyrophosphoryl-MurNAc-(pentapeptide)GlcNAc (lipid intermediate II). The sequence is that of UDP-N-acetylglucosamine--N-acetylmuramyl-(pentapeptide) pyrophosphoryl-undecaprenol N-acetylglucosamine transferase from Synechococcus elongatus (strain ATCC 33912 / PCC 7942 / FACHB-805) (Anacystis nidulans R2).